Here is a 181-residue protein sequence, read N- to C-terminus: Iron sulfur cluster assembly protein 1, mitochondrial (181 aa).

Positions 159–181 (RKTKNPTLGAEAAETPAAATATA) are disordered. The segment covering 168-181 (AEAAETPAAATATA) has biased composition (low complexity).

This sequence belongs to the NifU family. In terms of assembly, component of the core Fe-S cluster (ISC) assembly machinery. [2Fe-2S] cluster is required as a cofactor.

The protein localises to the mitochondrion matrix. Its pathway is cofactor biosynthesis; iron-sulfur cluster biosynthesis. Scaffold protein for the de novo synthesis of iron-sulfur (Fe-S) clusters within mitochondria, which is required for maturation of both mitochondrial and cytoplasmic [2Fe-2S] and [4Fe-4S] proteins. First, a [2Fe-2S] cluster is transiently assembled on the scaffold protein ISU1. In a second step, the cluster is released from ISU1, transferred to a glutaredoxin, followed by the formation of mitochondrial [2Fe-2S] proteins, the synthesis of [4Fe-4S] clusters and their target-specific insertion into the recipient apoproteins. Cluster assembly on ISU1 depends on the function of the cysteine desulfurase complex NFS1-ISD11, which serves as the sulfur donor for cluster synthesis, the iron-binding protein frataxin as the putative iron donor, and the electron transfer chain comprised of ferredoxin reductase and ferredoxin, which receive their electrons from NADH. This Yarrowia lipolytica (strain CLIB 122 / E 150) (Yeast) protein is Iron sulfur cluster assembly protein 1, mitochondrial (ISU1).